Reading from the N-terminus, the 204-residue chain is Large ribosomal subunit protein uL10 (204 aa).

A disordered region spans residues 170–204 (AADPSVIGGAGEASDQEPKTTETPEASAAQDNTNE). Residues 192–204 (TPEASAAQDNTNE) are compositionally biased toward polar residues.

The protein belongs to the universal ribosomal protein uL10 family. In terms of assembly, part of the ribosomal stalk of the 50S ribosomal subunit. The N-terminus interacts with L11 and the large rRNA to form the base of the stalk. The C-terminus forms an elongated spine to which L12 dimers bind in a sequential fashion forming a multimeric L10(L12)X complex.

Forms part of the ribosomal stalk, playing a central role in the interaction of the ribosome with GTP-bound translation factors. The polypeptide is Large ribosomal subunit protein uL10 (Cutibacterium acnes (strain DSM 16379 / KPA171202) (Propionibacterium acnes)).